We begin with the raw amino-acid sequence, 451 residues long: Hexokinase (451 aa).

Residues 6 to 445 (QQLFEKVVEI…SGKGAAAIAA (440 aa)) enclose the Hexokinase domain. Residues 63-195 (NGTETGNFLA…ELNVKCVAVV (133 aa)) are hexokinase small subdomain. 74 to 79 (DLGGTN) contacts ATP. Substrate contacts are provided by residues serine 144, 161–162 (TK), 196–197 (ND), 222–223 (TN), glutamate 249, and glutamate 283. The interval 196–434 (NDTVGTLASC…TRFCLRLSED (239 aa)) is hexokinase large subdomain. ATP contacts are provided by residues 288 to 289 (GM), 325 to 329 (TRYLT), and 401 to 405 (SLYKF).

Belongs to the hexokinase family. As to quaternary structure, monomer.

The enzyme catalyses a D-hexose + ATP = a D-hexose 6-phosphate + ADP + H(+). It carries out the reaction D-mannose + ATP = D-mannose 6-phosphate + ADP + H(+). The catalysed reaction is D-fructose + ATP = D-fructose 6-phosphate + ADP + H(+). It catalyses the reaction D-glucose + ATP = D-glucose 6-phosphate + ADP + H(+). Its pathway is carbohydrate metabolism; hexose metabolism. The protein operates within carbohydrate degradation; glycolysis; D-glyceraldehyde 3-phosphate and glycerone phosphate from D-glucose: step 1/4. In terms of biological role, catalyzes the phosphorylation of various hexoses to hexose 6-phosphate. In Schistosoma mansoni (Blood fluke), this protein is Hexokinase.